The primary structure comprises 632 residues: Chaperone protein HtpG (632 aa).

Residues 1-339 (MAHETMSFQA…SADLPLNVSR (339 aa)) are a; substrate-binding. Positions 340 to 559 (EILQESRDVK…DNDMSGYLQR (220 aa)) are b. The c stretch occupies residues 560–632 (MLKAAGQNAP…TNALLLSRAA (73 aa)).

Belongs to the heat shock protein 90 family. As to quaternary structure, homodimer.

Its subcellular location is the cytoplasm. In terms of biological role, molecular chaperone. Has ATPase activity. The sequence is that of Chaperone protein HtpG from Burkholderia lata (strain ATCC 17760 / DSM 23089 / LMG 22485 / NCIMB 9086 / R18194 / 383).